Reading from the N-terminus, the 122-residue chain is Large ribosomal subunit protein uL14 (122 aa).

Belongs to the universal ribosomal protein uL14 family. In terms of assembly, part of the 50S ribosomal subunit. Forms a cluster with proteins L3 and L19. In the 70S ribosome, L14 and L19 interact and together make contacts with the 16S rRNA in bridges B5 and B8.

In terms of biological role, binds to 23S rRNA. Forms part of two intersubunit bridges in the 70S ribosome. The sequence is that of Large ribosomal subunit protein uL14 from Heliobacterium modesticaldum (strain ATCC 51547 / Ice1).